The primary structure comprises 622 residues: Cilia- and flagella-associated protein 206 (622 aa).

This sequence belongs to the CFAP206 family.

It localises to the cytoplasm. The protein localises to the cytoskeleton. It is found in the cilium axoneme. The protein resides in the cilium basal body. Functionally, essential for sperm motility and is involved in the regulation of the beating frequency of motile cilia on the epithelial cells of the respiratory tract. Required for the establishment of radial spokes in sperm flagella. This Bos taurus (Bovine) protein is Cilia- and flagella-associated protein 206.